We begin with the raw amino-acid sequence, 315 residues long: Glutathione synthetase (315 aa).

Positions lysine 125–glutamate 310 constitute an ATP-grasp domain. Tryptophan 151 to glycine 207 is an ATP binding site. Mg(2+) contacts are provided by glutamate 281 and asparagine 283.

It belongs to the prokaryotic GSH synthase family. Requires Mg(2+) as cofactor. The cofactor is Mn(2+).

The catalysed reaction is gamma-L-glutamyl-L-cysteine + glycine + ATP = glutathione + ADP + phosphate + H(+). It participates in sulfur metabolism; glutathione biosynthesis; glutathione from L-cysteine and L-glutamate: step 2/2. In Salmonella typhimurium (strain LT2 / SGSC1412 / ATCC 700720), this protein is Glutathione synthetase.